The following is a 394-amino-acid chain: DNA replication and repair protein RecF (394 aa).

Position 30-37 (30-37 (GSNGQGKT)) interacts with ATP.

It belongs to the RecF family.

It is found in the cytoplasm. Functionally, the RecF protein is involved in DNA metabolism; it is required for DNA replication and normal SOS inducibility. RecF binds preferentially to single-stranded, linear DNA. It also seems to bind ATP. This is DNA replication and repair protein RecF from Cutibacterium acnes (strain DSM 16379 / KPA171202) (Propionibacterium acnes).